The following is a 144-amino-acid chain: Granulocyte-macrophage colony-stimulating factor (144 aa).

A signal peptide spans 1–17; the sequence is MWLQSLLLLGTVACSIS. Residues serine 22, serine 24, and serine 26 are each glycosylated (O-linked (GalNAc...) serine). The O-linked (GalNAc...) threonine; partial glycan is linked to threonine 27. Residues asparagine 44 and asparagine 54 are each glycosylated (N-linked (GlcNAc...) asparagine). Cystine bridges form between cysteine 71/cysteine 113 and cysteine 105/cysteine 138.

Belongs to the GM-CSF family. In terms of assembly, monomer. The signaling GM-CSF receptor complex is a dodecamer of two head-to-head hexamers of two alpha, two beta, and two ligand subunits.

Its subcellular location is the secreted. Its function is as follows. Cytokine that stimulates the growth and differentiation of hematopoietic precursor cells from various lineages, including granulocytes, macrophages, eosinophils and erythrocytes. The polypeptide is Granulocyte-macrophage colony-stimulating factor (CSF2) (Homo sapiens (Human)).